The chain runs to 314 residues: Putative S-adenosyl-L-methionine-dependent methyltransferase MAP_4191c (314 aa).

S-adenosyl-L-methionine contacts are provided by residues Asp138 and 167–168; that span reads DL.

Belongs to the UPF0677 family.

In terms of biological role, exhibits S-adenosyl-L-methionine-dependent methyltransferase activity. This chain is Putative S-adenosyl-L-methionine-dependent methyltransferase MAP_4191c, found in Mycolicibacterium paratuberculosis (strain ATCC BAA-968 / K-10) (Mycobacterium paratuberculosis).